The sequence spans 375 residues: Nicotinate-nucleotide--dimethylbenzimidazole phosphoribosyltransferase (375 aa).

E323 functions as the Proton acceptor in the catalytic mechanism. Residues 344–375 (LPEKPEELEAGEGPEAAEESSPEPENPEALAE) are disordered. Residues 351–375 (LEAGEGPEAAEESSPEPENPEALAE) show a composition bias toward acidic residues.

Belongs to the CobT family.

It carries out the reaction 5,6-dimethylbenzimidazole + nicotinate beta-D-ribonucleotide = alpha-ribazole 5'-phosphate + nicotinate + H(+). The protein operates within nucleoside biosynthesis; alpha-ribazole biosynthesis; alpha-ribazole from 5,6-dimethylbenzimidazole: step 1/2. Catalyzes the synthesis of alpha-ribazole-5'-phosphate from nicotinate mononucleotide (NAMN) and 5,6-dimethylbenzimidazole (DMB). This chain is Nicotinate-nucleotide--dimethylbenzimidazole phosphoribosyltransferase, found in Streptomyces avermitilis (strain ATCC 31267 / DSM 46492 / JCM 5070 / NBRC 14893 / NCIMB 12804 / NRRL 8165 / MA-4680).